Reading from the N-terminus, the 153-residue chain is Putative type II secretion system protein M (153 aa).

At M1 to I16 the chain is on the cytoplasmic side. A helical membrane pass occupies residues V17–I37. Residues D38–Q153 lie on the Periplasmic side of the membrane.

It belongs to the GSP M family. As to quaternary structure, type II secretion system is composed of four main components: the outer membrane complex, the inner membrane complex, the cytoplasmic secretion ATPase and the periplasm-spanning pseudopilus. Forms homodimers. Interacts with GspL. Interacts with GspE and GspF.

It is found in the cell inner membrane. In terms of biological role, inner membrane component of the type II secretion system required for the energy-dependent secretion of extracellular factors such as proteases and toxins from the periplasm. Plays a role in the complex assembly and recruits GspL resulting in a stable complex in the inner membrane. Provides thus a link between the energy-providing GspE protein in the cytoplasm and the rest of the T2SS machinery. This Escherichia coli (strain K12) protein is Putative type II secretion system protein M (gspM).